A 417-amino-acid polypeptide reads, in one-letter code: Transmembrane protease serine 11D (417 aa).

The Cytoplasmic portion of the chain corresponds to 1 to 17; sequence MYRPRSMVSPSRFFNPF. Residues 18 to 38 traverse the membrane as a helical; Signal-anchor for type II membrane protein segment; the sequence is MVALIVIITVGLLAMTAGLLI. Topologically, residues 39–417 are extracellular; sequence HFLAFDKRAY…RNWIRQQTGI (379 aa). The 117-residue stretch at 46-162 folds into the SEA domain; the sequence is RAYFYHSNFH…SNGITSLTDQ (117 aa). Disulfide bonds link C172–C291, C211–C227, C336–C352, and C363–C392. In terms of domain architecture, Peptidase S1 spans 186-416; it reads IIGGTQAETG…YRNWIRQQTG (231 aa). Active-site charge relay system residues include H226 and D271. S367 (charge relay system) is an active-site residue.

This sequence belongs to the peptidase S1 family. In terms of assembly, monomer. In terms of tissue distribution, isoform 1 and isoform 2 are expressed in the esophagus, tongue and trachea. Isoform 2 is also highly expressed in the adrenal cortex and heart.

The protein localises to the cell membrane. Its subcellular location is the secreted. Its function is as follows. May play some biological role in the host defense system on the mucous membrane independently of or in cooperation with other substances in airway mucous or bronchial secretions. Plays a role in the proteolytic processing of ACE2. Preferentially cleaves the C-terminal side of arginine residues at the P1 position of certain peptides. Isoform 2 may play a key role in regulating adrenal proliferation by specifically cleaving N-POMC. The chain is Transmembrane protease serine 11D (Tmprss11d) from Rattus norvegicus (Rat).